The primary structure comprises 130 residues: Small ribosomal subunit protein uS11 (130 aa).

The protein belongs to the universal ribosomal protein uS11 family. As to quaternary structure, part of the 30S ribosomal subunit. Interacts with proteins S7 and S18. Binds to IF-3.

Its function is as follows. Located on the platform of the 30S subunit, it bridges several disparate RNA helices of the 16S rRNA. Forms part of the Shine-Dalgarno cleft in the 70S ribosome. The protein is Small ribosomal subunit protein uS11 of Kosmotoga olearia (strain ATCC BAA-1733 / DSM 21960 / TBF 19.5.1).